A 382-amino-acid polypeptide reads, in one-letter code: D-galactonate dehydratase (382 aa).

Asp-183 lines the Mg(2+) pocket. His-185 acts as the Proton donor in catalysis. Positions 209 and 235 each coordinate Mg(2+). Residue His-285 is the Proton acceptor of the active site.

This sequence belongs to the mandelate racemase/muconate lactonizing enzyme family. GalD subfamily. It depends on Mg(2+) as a cofactor.

The catalysed reaction is D-galactonate = 2-dehydro-3-deoxy-D-galactonate + H2O. It participates in carbohydrate acid metabolism; D-galactonate degradation; D-glyceraldehyde 3-phosphate and pyruvate from D-galactonate: step 1/3. In terms of biological role, catalyzes the dehydration of D-galactonate to 2-keto-3-deoxy-D-galactonate. The protein is D-galactonate dehydratase of Escherichia coli O9:H4 (strain HS).